We begin with the raw amino-acid sequence, 554 residues long: Myo-inositol transporter 1 (554 aa).

Polar residues predominate over residues 1 to 13 (MGSSTNNTQSKAT). The interval 1 to 57 (MGSSTNNTQSKATPSVLENEVNSSKSSVVSSTSSAKGLLRETTNHGTMETSSVQISE) is disordered. Residues asparagine 6 and asparagine 22 are each glycosylated (N-linked (GlcNAc...) asparagine). The span at 15 to 34 (SVLENEVNSSKSSVVSSTSS) shows a compositional bias: low complexity. The segment covering 44-57 (NHGTMETSSVQISE) has biased composition (polar residues). 6 helical membrane-spanning segments follow: residues 65 to 85 (MVLVLTLASSISGFMFGYDTG), 110 to 130 (FITSATSLGALLGAVVGGVLA), 144 to 164 (IIFVVGTIIQLAARTVWTMIA), 167 to 187 (FVLGWGVGIASLIAPLMISEL), 196 to 216 (LIVTNVIFITGGQLIAYFINW), and 227 to 247 (VSVGLCMVPPVLQFVLFWFLP). Asparagine 279 is a glycosylation site (N-linked (GlcNAc...) asparagine). Residues 313 to 332 (GNFRALILACGLQGIQQFTG) traverse the membrane as a helical segment. Asparagine 351 is a glycosylation site (N-linked (GlcNAc...) asparagine). Transmembrane regions (helical) follow at residues 354–374 (AVSIIIAATNFVFTGIAICII), 382–402 (ILLVGMPCMCISLIVCAVAFH), 420–440 (GWGIVVIIGMILYVASYAIGI), 459–479 (IGAMYAACTNWAGSLVIASTF), and 490–510 (GTFSFFAGLCFIAFFFVYFLL).

This sequence belongs to the major facilitator superfamily. Sugar transporter (TC 2.A.1.1) family.

It localises to the cell membrane. The catalysed reaction is myo-inositol(out) + H(+)(out) = myo-inositol(in) + H(+)(in). Functionally, major transporter for myo-inositol. The protein is Myo-inositol transporter 1 of Candida albicans (strain SC5314 / ATCC MYA-2876) (Yeast).